A 110-amino-acid polypeptide reads, in one-letter code: UPF0122 protein GK1195 (110 aa).

The protein belongs to the UPF0122 family.

Its function is as follows. Might take part in the signal recognition particle (SRP) pathway. This is inferred from the conservation of its genetic proximity to ftsY/ffh. May be a regulatory protein. The chain is UPF0122 protein GK1195 from Geobacillus kaustophilus (strain HTA426).